The primary structure comprises 754 residues: Fibronectin type III domain-containing protein 1 (754 aa).

A signal peptide spans 1-19 (MKSWISISFLCMLFPLSNG). Disordered stretches follow at residues 40-61 (SLQGTAPTSQYPQGGTQISQGG), 85-106 (AQISQGGGQGISQGATQGTQFS), and 130-163 (AQHSQAGAQGSQFPQSAAHTAQHHQGTAQPAQSG). Residues 130 to 161 (AQHSQAGAQGSQFPQSAAHTAQHHQGTAQPAQ) show a composition bias toward low complexity. 5 Fibronectin type-III domains span residues 250–355 (PPQS…TPDL), 359–449 (APLN…TDKF), 453–545 (APRN…TKMD), 549–642 (EPMS…LPKP), and 645–742 (LVPN…SFPG). The tract at residues 731 to 754 (SNLSSQQFSFPGQQVGQQQSNPWI) is disordered.

In terms of tissue distribution, prismatic layer of shell (at protein level). Expressed primarily in the mantle with highest level in the outer epithelium of the mantle edge and lower level in the mantle pallium.

Its subcellular location is the secreted. The polypeptide is Fibronectin type III domain-containing protein 1 (Margaritifera margaritifera (Freshwater pearl mussel)).